The following is a 219-amino-acid chain: 2-hydroxy-3-keto-5-methylthiopentenyl-1-phosphate phosphatase (219 aa).

This sequence belongs to the HAD-like hydrolase superfamily. MtnX family.

It carries out the reaction 2-hydroxy-5-methylsulfanyl-3-oxopent-1-enyl phosphate + H2O = 1,2-dihydroxy-5-(methylsulfanyl)pent-1-en-3-one + phosphate. Its pathway is amino-acid biosynthesis; L-methionine biosynthesis via salvage pathway; L-methionine from S-methyl-5-thio-alpha-D-ribose 1-phosphate: step 4/6. Dephosphorylates 2-hydroxy-3-keto-5-methylthiopentenyl-1-phosphate (HK-MTPenyl-1-P) yielding 1,2-dihydroxy-3-keto-5-methylthiopentene (DHK-MTPene). The chain is 2-hydroxy-3-keto-5-methylthiopentenyl-1-phosphate phosphatase from Bacillus cereus (strain AH187).